A 130-amino-acid chain; its full sequence is MIGNYNYGTGRRKSAVARVFIKSGSGQIVVNGKPANEYFSRETGLMVIRQPLELTNNVETFDIMVNVNGGGESGQAGAVRHGITRALIDYDATLKSELSKAGFVTRDAREVERKKVGLRKARRAKQFSKR.

This sequence belongs to the universal ribosomal protein uS9 family.

The protein is Small ribosomal subunit protein uS9 of Janthinobacterium sp. (strain Marseille) (Minibacterium massiliensis).